The sequence spans 146 residues: Anti-sigma F factor (146 aa).

The protein belongs to the anti-sigma-factor family.

The catalysed reaction is L-seryl-[protein] + ATP = O-phospho-L-seryl-[protein] + ADP + H(+). The enzyme catalyses L-threonyl-[protein] + ATP = O-phospho-L-threonyl-[protein] + ADP + H(+). In terms of biological role, binds to sigma F and blocks its ability to form an RNA polymerase holoenzyme (E-sigma F). Phosphorylates SpoIIAA on a serine residue. This phosphorylation may enable SpoIIAA to act as an anti-anti-sigma factor that counteracts SpoIIAB and thus releases sigma F from inhibition. The sequence is that of Anti-sigma F factor from Anoxybacillus flavithermus (strain DSM 21510 / WK1).